The chain runs to 246 residues: Tyrosine recombinase XerD-like (246 aa).

The Core-binding (CB) domain occupies 1–72 (MINDINNFIE…AVNQFLFFLY (72 aa)). The 163-residue stretch at 84–246 (QETEKITLAQ…TPITLERYYR (163 aa)) folds into the Tyr recombinase domain. Active-site residues include Lys149 and Arg212. Tyr244 functions as the O-(3'-phospho-DNA)-tyrosine intermediate in the catalytic mechanism.

It belongs to the 'phage' integrase family. XerD-like subfamily.

The protein localises to the cytoplasm. In terms of biological role, putative tyrosine recombinase. Not involved in the cutting and rejoining of the recombining DNA molecules on dif(SL) site. In Streptococcus agalactiae serotype V (strain ATCC BAA-611 / 2603 V/R), this protein is Tyrosine recombinase XerD-like.